The following is a 527-amino-acid chain: Putative ABC transporter peptide-binding protein BMEII0859 (527 aa).

A signal peptide spans 1–23 (MRLRNFYSALALSAAVFAGPLYA).

The protein belongs to the bacterial solute-binding protein 5 family. As to quaternary structure, the complex is composed of two ATP-binding proteins (BMEII0863 and BMEII0864), two transmembrane proteins (BMEII0860 and BMEII0861) and a solute-binding protein (BMEII0859).

It is found in the periplasm. In terms of biological role, probably part of an ABC transporter complex that could be involved in peptide import. The polypeptide is Putative ABC transporter peptide-binding protein BMEII0859 (Brucella melitensis biotype 1 (strain ATCC 23456 / CCUG 17765 / NCTC 10094 / 16M)).